Consider the following 776-residue polypeptide: DExH-box ATP-dependent RNA helicase DExH18, mitochondrial (776 aa).

A mitochondrion-targeting transit peptide spans 1–84; the sequence is MARGVAGVLR…RSFSSTVDNN (84 aa). The tract at residues 80 to 101 is disordered; the sequence is TVDNNGENDDIEESVGSESDDY. Positions 85–101 are enriched in acidic residues; that stretch reads GENDDIEESVGSESDDY. The Helicase ATP-binding domain occupies 268 to 426; that stretch reads FARAMKRKIV…RFKPLVVEAK (159 aa). 281-288 is a binding site for ATP; it reads GPTNSGKT. Positions 361-364 match the DEIH box; degenerate motif; sequence DEIQ. Residues 427-595 enclose the Helicase C-terminal domain; the sequence is TLLGELKNVK…LFAAQVPDMA (169 aa).

It belongs to the DExH box helicase family. As to quaternary structure, homodimer; in free form. Component of the mitochondrial degradosome (mtEXO) complex which is a heteropentamer containing 2 copies of SUPV3L1 and 3 copies of PNPT1. Mg(2+) serves as cofactor. It depends on Mn(2+) as a cofactor.

It is found in the nucleus. The protein resides in the mitochondrion matrix. The protein localises to the mitochondrion nucleoid. It carries out the reaction ATP + H2O = ADP + phosphate + H(+). Its function is as follows. Major helicase player in mitochondrial RNA metabolism. Component of the mitochondrial degradosome (mtEXO) complex, that degrades 3' overhang double-stranded RNA with a 3'-to-5' directionality in an ATP-dependent manner. ATPase and ATP-dependent multisubstrate helicase, able to unwind double-stranded (ds) DNA and RNA, and RNA/DNA heteroduplexes in the 5'-to-3' direction. Plays a role in the RNA surveillance system in mitochondria; regulates the stability of mature mRNAs, the removal of aberrantly formed mRNAs and the rapid degradation of non coding processing intermediates. The sequence is that of DExH-box ATP-dependent RNA helicase DExH18, mitochondrial from Arabidopsis thaliana (Mouse-ear cress).